A 185-amino-acid chain; its full sequence is Acireductone dioxygenase (185 aa).

Positions 96, 98, 102, and 140 each coordinate Fe(2+). Residues His96, His98, Glu102, and His140 each contribute to the Ni(2+) site.

Belongs to the acireductone dioxygenase (ARD) family. In terms of assembly, monomer. The cofactor is Fe(2+). Ni(2+) is required as a cofactor.

The enzyme catalyses 1,2-dihydroxy-5-(methylsulfanyl)pent-1-en-3-one + O2 = 3-(methylsulfanyl)propanoate + CO + formate + 2 H(+). The catalysed reaction is 1,2-dihydroxy-5-(methylsulfanyl)pent-1-en-3-one + O2 = 4-methylsulfanyl-2-oxobutanoate + formate + 2 H(+). Its pathway is amino-acid biosynthesis; L-methionine biosynthesis via salvage pathway; L-methionine from S-methyl-5-thio-alpha-D-ribose 1-phosphate: step 5/6. Its function is as follows. Catalyzes 2 different reactions between oxygen and the acireductone 1,2-dihydroxy-3-keto-5-methylthiopentene (DHK-MTPene) depending upon the metal bound in the active site. Fe-containing acireductone dioxygenase (Fe-ARD) produces formate and 2-keto-4-methylthiobutyrate (KMTB), the alpha-ketoacid precursor of methionine in the methionine recycle pathway. Ni-containing acireductone dioxygenase (Ni-ARD) produces methylthiopropionate, carbon monoxide and formate, and does not lie on the methionine recycle pathway. The sequence is that of Acireductone dioxygenase from Hahella chejuensis (strain KCTC 2396).